The following is a 474-amino-acid chain: MTVKTRFAPSPTGYLHVGGARTALYSWLYAKSQGGEFVLRIEDTDLERNSQEAVDAILEGMQWLGLEWNEGPYFQTQRFDRYNEMVDKLLAEDKAYKCYASKELLDEVRAEQEANKEMPRYDAEHPKIKAANEAAKDGDPCVIRFRNPKEGSVVFEDQIRGRIEISNSQMDDLIIRRTDGSPTYNFCVVVDDWDMGITHVIRGEDHINNTPRQINIYEALGAPVPTFAHCAMILGDDGAKLSKRHGAVSVMQYRDMGYLPVALNNYLVRLGWSHGDQEIFSQEEMINLFSLNAISKSASAFNTDKLLWLNNHYIKTSDPEYVAEHLQWHLDQKGIKTENGPAITDVIKLVGERCNTLVELADQIGYFYQDFDAFDADAAKKHLRGVAKQPLEVALAKVEALTEWTTENLHQVIADVCTELEIGMGKIGMPLRVAVTGGGQSPSVDAVMQLIGKERVVARIKMALAFIAEREANA.

A 'HIGH' region motif is present at residues 9–19 (PSPTGYLHVGG). The 'KMSKS' region motif lies at 240–244 (KLSKR). Lys243 provides a ligand contact to ATP.

It belongs to the class-I aminoacyl-tRNA synthetase family. Glutamate--tRNA ligase type 1 subfamily. Monomer.

Its subcellular location is the cytoplasm. The enzyme catalyses tRNA(Glu) + L-glutamate + ATP = L-glutamyl-tRNA(Glu) + AMP + diphosphate. Its function is as follows. Catalyzes the attachment of glutamate to tRNA(Glu) in a two-step reaction: glutamate is first activated by ATP to form Glu-AMP and then transferred to the acceptor end of tRNA(Glu). The sequence is that of Glutamate--tRNA ligase from Vibrio vulnificus (strain CMCP6).